Reading from the N-terminus, the 97-residue chain is Defensin-A2 (97 aa).

The first 19 residues, 1-19, serve as a signal peptide directing secretion; sequence MRTLSLLLALLFLAAQTLA. A propeptide spanning residues 20-61 is cleaved from the precursor; it reads QPIDEGAEEVITEEPEITETQDPTTIMLIERGIGGDSTDATR. 3 cysteine pairs are disulfide-bonded: cysteine 66–cysteine 93, cysteine 68–cysteine 82, and cysteine 72–cysteine 92. Positions 96–97 are excised as a propeptide; it reads TS.

Belongs to the alpha-defensin family. As to expression, highly expressed in intestine, expressed at lower levels in spleen, and at very low levels in kidney and lung.

It is found in the secreted. Functionally, has antimicrobial activity. This chain is Defensin-A2, found in Ornithorhynchus anatinus (Duckbill platypus).